Reading from the N-terminus, the 446-residue chain is tRNA modification GTPase MnmE (446 aa).

Residues Arg-23, Glu-81, and Lys-120 each contribute to the (6S)-5-formyl-5,6,7,8-tetrahydrofolate site. One can recognise a TrmE-type G domain in the interval 216-370; sequence GFKVAIIGKP…LIKELELILD (155 aa). Asn-226 serves as a coordination point for K(+). Residues 226–231, 245–251, and 270–273 each bind GTP; these read NVGKSS, SDIAGTT, and DTAG. Ser-230 lines the Mg(2+) pocket. Residues Ser-245, Ile-247, and Thr-250 each contribute to the K(+) site. Residue Thr-251 participates in Mg(2+) binding. Lys-446 is a (6S)-5-formyl-5,6,7,8-tetrahydrofolate binding site.

This sequence belongs to the TRAFAC class TrmE-Era-EngA-EngB-Septin-like GTPase superfamily. TrmE GTPase family. As to quaternary structure, homodimer. Heterotetramer of two MnmE and two MnmG subunits. The cofactor is K(+).

The protein resides in the cytoplasm. Exhibits a very high intrinsic GTPase hydrolysis rate. Involved in the addition of a carboxymethylaminomethyl (cmnm) group at the wobble position (U34) of certain tRNAs, forming tRNA-cmnm(5)s(2)U34. The polypeptide is tRNA modification GTPase MnmE (Aliarcobacter butzleri (strain RM4018) (Arcobacter butzleri)).